The following is a 365-amino-acid chain: Glycerol dehydrogenase (365 aa).

Positions 37, 94, 95, 116, and 119 each coordinate NAD(+). Residue Asp-121 participates in glycerol binding. Residues Ser-125, Leu-127, and Tyr-131 each contribute to the NAD(+) site. Asp-171, His-254, and His-271 together coordinate Mn(2+). Position 254 (His-254) interacts with glycerol.

The protein belongs to the iron-containing alcohol dehydrogenase family. In terms of assembly, homohexamer. Mn(2+) is required as a cofactor.

It catalyses the reaction glycerol + NAD(+) = dihydroxyacetone + NADH + H(+). The catalysed reaction is hydroxyacetone + NADH + H(+) = (S)-propane-1,2-diol + NAD(+). It functions in the pathway polyol metabolism; glycerol fermentation; glycerone phosphate from glycerol (oxidative route): step 1/2. Inhibited by zinc. Catalyzes the NAD-dependent oxidation of glycerol to dihydroxyacetone (glycerone). Allows microorganisms to utilize glycerol as a source of carbon under anaerobic conditions. Exhibits a rather broad substrate specificity since it can also oxidize 1,2-propanediol and 2,3-butanediol and reduce dihydroxyacetone. Cannot use NADP(+) as an electron acceptor for the oxidation of glycerol. This is Glycerol dehydrogenase from Citrobacter freundii.